The primary structure comprises 291 residues: Ribosomal RNA small subunit methyltransferase A (291 aa).

S-adenosyl-L-methionine contacts are provided by His-37, Leu-39, Gly-64, Glu-85, Asp-110, and Asn-131.

The protein belongs to the class I-like SAM-binding methyltransferase superfamily. rRNA adenine N(6)-methyltransferase family. RsmA subfamily.

It localises to the cytoplasm. It carries out the reaction adenosine(1518)/adenosine(1519) in 16S rRNA + 4 S-adenosyl-L-methionine = N(6)-dimethyladenosine(1518)/N(6)-dimethyladenosine(1519) in 16S rRNA + 4 S-adenosyl-L-homocysteine + 4 H(+). Its function is as follows. Specifically dimethylates two adjacent adenosines (A1518 and A1519) in the loop of a conserved hairpin near the 3'-end of 16S rRNA in the 30S particle. May play a critical role in biogenesis of 30S subunits. The sequence is that of Ribosomal RNA small subunit methyltransferase A from Dehalococcoides mccartyi (strain CBDB1).